The following is a 463-amino-acid chain: Kynureninase 2 (463 aa).

Residues Leu134, Thr135, 162–165, Asp247, His250, and Tyr272 contribute to the pyridoxal 5'-phosphate site; that span reads FPSD. Lys273 is subject to N6-(pyridoxal phosphate)lysine. Pyridoxal 5'-phosphate-binding residues include Trp312 and Asn340.

The protein belongs to the kynureninase family. In terms of assembly, homodimer. Requires pyridoxal 5'-phosphate as cofactor.

The protein localises to the cytoplasm. It carries out the reaction L-kynurenine + H2O = anthranilate + L-alanine + H(+). The enzyme catalyses 3-hydroxy-L-kynurenine + H2O = 3-hydroxyanthranilate + L-alanine + H(+). The protein operates within amino-acid degradation; L-kynurenine degradation; L-alanine and anthranilate from L-kynurenine: step 1/1. It participates in cofactor biosynthesis; NAD(+) biosynthesis; quinolinate from L-kynurenine: step 2/3. Functionally, catalyzes the cleavage of L-kynurenine (L-Kyn) and L-3-hydroxykynurenine (L-3OHKyn) into anthranilic acid (AA) and 3-hydroxyanthranilic acid (3-OHAA), respectively. This chain is Kynureninase 2 (bna5-2), found in Aspergillus niger (strain ATCC MYA-4892 / CBS 513.88 / FGSC A1513).